We begin with the raw amino-acid sequence, 287 residues long: D-apionate oxidoisomerase (287 aa).

NAD(+)-binding positions include 13–15 (GKM), glutamate 36, and aspartate 71. Histidine 116 and glutamate 186 together coordinate Zn(2+).

Belongs to the ApnO family. The cofactor is Zn(2+).

The enzyme catalyses D-apionate + NAD(+) = 3-oxoisoapionate + NADH + H(+). It participates in carbohydrate metabolism. Functionally, involved in catabolism of D-apiose. Catalyzes the conversion of D-apionate to 3-oxo-isoapionate. In Blautia hydrogenotrophica (strain DSM 10507 / JCM 14656 / S5a33) (Ruminococcus hydrogenotrophicus), this protein is D-apionate oxidoisomerase.